The sequence spans 37 residues: Omega-agatoxin-Aa3d (37 aa).

It belongs to the neurotoxin 04 (omega-agtx) family. 03 (type II/III omega-agtx) subfamily. Disulfide bonds are present. In terms of tissue distribution, expressed by the venom gland.

It localises to the secreted. Omega-agatoxins are antagonists of voltage-gated calcium channels. This toxin blocks calcium channels in insect central neurons but not at peripheral neuromuscular junctions. In vertebrates, it is broadly active against all high-threshold Cav1/CACNA1 channels and Cav2.2/CACNA1B channels. The polypeptide is Omega-agatoxin-Aa3d (Agelenopsis aperta (North American funnel-web spider)).